Here is a 348-residue protein sequence, read N- to C-terminus: (+)-germacrene D synthase (348 aa).

Mg(2+)-binding residues include Asp-97, Asp-101, Asn-242, and Ser-246. The DDXXD motif motif lies at 97 to 101 (DDILD).

This sequence belongs to the terpene synthase family. The cofactor is Mg(2+).

It catalyses the reaction (2E,6E)-farnesyl diphosphate = (+)-germacrene D + diphosphate. The protein operates within secondary metabolite biosynthesis; terpenoid biosynthesis. Its function is as follows. Sesquiterpene synthase converting farnesyl diphosphate to eight sesquiterpenes, with (+)-germacrene D and an unidentified oxygenated sesquiterpene as the major products. Has no diterpene synthase activity. The chain is (+)-germacrene D synthase from Selaginella moellendorffii (Spikemoss).